We begin with the raw amino-acid sequence, 108 residues long: Glutaredoxin-1 (108 aa).

One can recognise a Glutaredoxin domain in the interval 3 to 106 (EEFVQQRLAN…DILSSIGVLR (104 aa)). Residues Cys23 and Cys26 are joined by a disulfide bond.

Belongs to the glutaredoxin family.

Its subcellular location is the virion. Functionally, has thioltransferase and dehydroascorbate reductase activities. The protein is Glutaredoxin-1 (OPG075) of Cowpox virus (strain GRI-90 / Grishak) (CPV).